Reading from the N-terminus, the 303-residue chain is Acetylglutamate kinase (303 aa).

Residues Gly76–Gly77, Arg98, and Asn199 each bind substrate.

It belongs to the acetylglutamate kinase family. ArgB subfamily.

Its subcellular location is the cytoplasm. It catalyses the reaction N-acetyl-L-glutamate + ATP = N-acetyl-L-glutamyl 5-phosphate + ADP. The protein operates within amino-acid biosynthesis; L-arginine biosynthesis; N(2)-acetyl-L-ornithine from L-glutamate: step 2/4. In terms of biological role, catalyzes the ATP-dependent phosphorylation of N-acetyl-L-glutamate. This Clavibacter michiganensis subsp. michiganensis (strain NCPPB 382) protein is Acetylglutamate kinase.